The sequence spans 351 residues: Anthranilate phosphoribosyltransferase (351 aa).

Residues Gly-80, 83-84 (GD), Thr-88, 90-93 (NIST), 108-116 (KHGNRSITS), and Ser-120 each bind 5-phospho-alpha-D-ribose 1-diphosphate. Position 80 (Gly-80) interacts with anthranilate. Ser-92 is a binding site for Mg(2+). Asn-111 contacts anthranilate. Anthranilate is bound at residue Arg-166. Mg(2+) contacts are provided by Asp-229 and Glu-230.

It belongs to the anthranilate phosphoribosyltransferase family. As to quaternary structure, homodimer. It depends on Mg(2+) as a cofactor.

The enzyme catalyses N-(5-phospho-beta-D-ribosyl)anthranilate + diphosphate = 5-phospho-alpha-D-ribose 1-diphosphate + anthranilate. It participates in amino-acid biosynthesis; L-tryptophan biosynthesis; L-tryptophan from chorismate: step 2/5. Catalyzes the transfer of the phosphoribosyl group of 5-phosphorylribose-1-pyrophosphate (PRPP) to anthranilate to yield N-(5'-phosphoribosyl)-anthranilate (PRA). The sequence is that of Anthranilate phosphoribosyltransferase from Chlorobaculum parvum (strain DSM 263 / NCIMB 8327) (Chlorobium vibrioforme subsp. thiosulfatophilum).